The chain runs to 797 residues: N-acetylneuraminate (7)9-O-acetyltransferase (797 aa).

Topologically, residues 1–18 (MAALAYNLGKREINHYFS) are cytoplasmic. A helical membrane pass occupies residues 19–39 (VRSAKVLALVAVLLLAACHLA). The Lumenal portion of the chain corresponds to 40–313 (SRRYRGNDSC…QPRPPLTLIQ (274 aa)). An N-linked (GlcNAc...) asparagine glycan is attached at asparagine 46. Residue serine 94 is the Acyl-ester intermediate of the active site. N-linked (GlcNAc...) asparagine glycans are attached at residues asparagine 175 and asparagine 187. Active-site residues include aspartate 270 and histidine 273. The chain crosses the membrane as a helical span at residues 314–334 (KLAACFFTLSIIGYFIFYVIH). At 335–363 (RNAHRKNKPCTDLESGEEKKNIINTPVSS) the chain is on the cytoplasmic side. A helical membrane pass occupies residues 364 to 384 (LEILLQSFCKLGLIMAYFYMC). The Lumenal segment spans residues 385 to 395 (DRANLFMKENK). Residues 396 to 416 (FYTHSSFFIPIIYILVLGVFY) form a helical membrane-spanning segment. Residues 417–439 (NENTKETKVLNREQTDEWKGWMQ) are Cytoplasmic-facing. Residues 440–460 (LVILIYHISGASTFLPVYMHI) form a helical membrane-spanning segment. A topological domain (lumenal) is located at residue arginine 461. A helical membrane pass occupies residues 462–482 (VLVAAYLFQTGYGHFSYFWIK). At 483–486 (GDFG) the chain is on the cytoplasmic side. A helical transmembrane segment spans residues 487–507 (IHRVCQVLFRLNFLVVVLCIV). Over 508 to 513 (MDRPYQ) the chain is Lumenal. Residues 514–534 (FYYFVPLVTVWFMVIYVTLAL) traverse the membrane as a helical segment. Topologically, residues 535–546 (WPQITQKKANGN) are cytoplasmic. A helical transmembrane segment spans residues 547 to 567 (FFWYLGLLLKLGLLLLCIWFL). Residues 568-599 (AYSQGAFEKIFSLWPLSKCFELEGSVYEWWFR) lie on the Lumenal side of the membrane. A helical membrane pass occupies residues 600-620 (WRLDRYVVFHGVLFAFIYLAL). The Cytoplasmic portion of the chain corresponds to 621–638 (QRRQILSEGKGEPLFSNK). Residues 639-659 (ISNFLLFVSVVSFLTYSIWAS) traverse the membrane as a helical segment. Residues 660–671 (SCKNKAECNELH) lie on the Lumenal side of the membrane. A helical transmembrane segment spans residues 672 to 692 (PSVSVVQIVAFILIRNIPGYA). The Cytoplasmic segment spans residues 693 to 698 (RSIYSS). The helical transmembrane segment at 699–719 (FFAWFGKISLELFICQYHIWL) threads the bilayer. Residues 720–725 (AADTRG) lie on the Lumenal side of the membrane. A helical transmembrane segment spans residues 726-746 (ILVLIPGNPTLNIIVSTFIFV). The Cytoplasmic portion of the chain corresponds to 747–770 (CVAHEISQITTDLAQVVIPKDNPS). A helical membrane pass occupies residues 771-791 (LFRRLACTIAFFGGVLILSSI). The Lumenal segment spans residues 792–797 (QDKSRL).

It belongs to the PC-esterase family. CASD1 subfamily. In terms of processing, N-glycosylated. Ubiquitously expressed.

The protein localises to the golgi apparatus membrane. It carries out the reaction CMP-N-acetyl-beta-neuraminate + acetyl-CoA = CMP-N-acetyl-9-O-acetyl-beta-neuraminate + CoA. It catalyses the reaction a ganglioside GD3 (d18:1(4E)) + acetyl-CoA = a ganglioside Ac-O-7-GD3(d18:1(4E)) + CoA. The catalysed reaction is CMP-N-acetyl-beta-neuraminate + acetyl-CoA = CMP-N-acetyl-7-O-acetyl-beta-neuraminate + CoA. Key enzyme in the biosynthesis of O-acetylated (O-Ac) sialoglycans such as gangliosides O-AcGD3 and O-AcGD2, which affect various processes such as cell-cell interactions, host-pathogen recognition. Catalyzes the transfer of an acetyl group from a donor, the acetyl-coenzyme-A molecule (acetyl-CoA), to the C7/8/9 OH-position of a sialic acid residue. The primary site of O-acetyl group transfer on sialic acid seems to depend on cell type and can be C7, from which the O-acetyl group could subsequently migrate to the C8 and then to the C9 position, or at C9 with possibility of migrating to the C8 and then to the C7 position. Together with ST8SIA1 (GD3 synthase) it increases the levels of ganglioside Ac-O-7-GD3. Can transfer the acetyl group from acetyl-CoA to free sialate (N-acetylneuraminate, Neu5Ac) in vitro, but has preferred substrate specificity for CMP-activated sialate (CMP-Neu5Ac), resulting in the formation of 9-O-acetylated CMP-Neu5Ac (CMP-Neu5,9Ac2). CMP-Neu5,9Ac2 may be used by sialyltransferases as a sialate donor for glycoconjugate acceptors such as ganglioside GD3. O-acetylation at position C9 of ganglioside GD3 can counteract the pro-apoptotic effects of the ganglioside GD3 in tumor cells. The sequence is that of N-acetylneuraminate (7)9-O-acetyltransferase from Mus musculus (Mouse).